The primary structure comprises 149 residues: UPF0102 protein Bpro_0391 (149 aa).

Positions 1-30 (MWFSRKQVVKPPPDGSRAQPGQVTTKSRGD) are disordered.

Belongs to the UPF0102 family.

The chain is UPF0102 protein Bpro_0391 from Polaromonas sp. (strain JS666 / ATCC BAA-500).